A 517-amino-acid chain; its full sequence is Aldehyde dehydrogenase, mitochondrial (517 aa).

Residues 1–17 (MLRAAARFGPRLGRRLL) constitute a mitochondrion transit peptide. The SIFI-degron motif lies at 9 to 24 (GPRLGRRLLSAAATQA). An N6-acetyllysine mark is found at lysine 52, lysine 73, lysine 78, and lysine 159. 262 to 267 (GSTEIG) serves as a coordination point for NAD(+). Catalysis depends on glutamate 285, which acts as the Proton acceptor. The active-site Nucleophile is cysteine 319. N6-acetyllysine occurs at positions 368, 383, 426, 428, and 451.

Belongs to the aldehyde dehydrogenase family. In terms of assembly, homotetramer. Post-translationally, in response to mitochondrial stress, the precursor protein is ubiquitinated by the SIFI complex in the cytoplasm before mitochondrial import, leading to its degradation. Within the SIFI complex, UBR4 initiates ubiquitin chain that are further elongated or branched by KCMF1.

The protein resides in the mitochondrion matrix. It catalyses the reaction an aldehyde + NAD(+) + H2O = a carboxylate + NADH + 2 H(+). The protein operates within alcohol metabolism; ethanol degradation; acetate from ethanol: step 2/2. Its function is as follows. Required for clearance of cellular formaldehyde, a cytotoxic and carcinogenic metabolite that induces DNA damage. This Homo sapiens (Human) protein is Aldehyde dehydrogenase, mitochondrial (ALDH2).